A 186-amino-acid chain; its full sequence is ATP synthase subunit b, chloroplastic (186 aa).

The helical transmembrane segment at 26–44 (ILETNLINLGVVIGTLLYF) threads the bilayer.

It belongs to the ATPase B chain family. As to quaternary structure, F-type ATPases have 2 components, F(1) - the catalytic core - and F(0) - the membrane proton channel. F(1) has five subunits: alpha(3), beta(3), gamma(1), delta(1), epsilon(1). F(0) has four main subunits: a(1), b(1), b'(1) and c(10-14). The alpha and beta chains form an alternating ring which encloses part of the gamma chain. F(1) is attached to F(0) by a central stalk formed by the gamma and epsilon chains, while a peripheral stalk is formed by the delta, b and b' chains.

The protein resides in the plastid. It is found in the chloroplast thylakoid membrane. In terms of biological role, f(1)F(0) ATP synthase produces ATP from ADP in the presence of a proton or sodium gradient. F-type ATPases consist of two structural domains, F(1) containing the extramembraneous catalytic core and F(0) containing the membrane proton channel, linked together by a central stalk and a peripheral stalk. During catalysis, ATP synthesis in the catalytic domain of F(1) is coupled via a rotary mechanism of the central stalk subunits to proton translocation. Component of the F(0) channel, it forms part of the peripheral stalk, linking F(1) to F(0). This Chara vulgaris (Common stonewort) protein is ATP synthase subunit b, chloroplastic.